The sequence spans 263 residues: 4'-phosphopantetheinyl transferase pptA (263 aa).

This sequence belongs to the P-Pant transferase superfamily.

It carries out the reaction apo-[ACP] + CoA = holo-[ACP] + adenosine 3',5'-bisphosphate + H(+). In terms of biological role, transfers the 4'-phosphopantetheine moiety from coenzyme A to a Ser of an acyl-carrier-protein. Activates the peptidyl carrier protein (PCP) domains of surfactin synthas. In Paxillus involutus (Naked brimcap), this protein is 4'-phosphopantetheinyl transferase pptA (pptA).